An 871-amino-acid polypeptide reads, in one-letter code: Phosphoinositide 3-kinase regulatory subunit 5 (871 aa).

Met-1 is modified (N-acetylmethionine). Residues 25–101 (SLGRRSAPWS…TPHFPPDSDL (77 aa)) are heterodimerization. Residues 381 to 413 (MDSGYVEDSEENSEWPQKPGSQKRQGHRRPGQK) form a disordered region. A phosphoserine mark is found at Ser-451 and Ser-500. An interaction with beta-gamma G protein dimers region spans residues 646–746 (PILADMLLYY…WSNLEKVCTS (101 aa)).

Heterodimer of a catalytic subunit (PIK3CG/p120) and a regulatory (PIK3R5a/p101) subunit. Interacts with beta-gamma G protein dimers.

It localises to the nucleus. Its subcellular location is the cytoplasm. The protein resides in the cell membrane. Greatly activated by G gamma proteins. Regulatory subunit of the PI3K gamma complex. Required for recruitment of the catalytic subunit to the plasma membrane via interaction with beta-gamma G protein dimers. Required for G protein-mediated activation of PIK3CG. The sequence is that of Phosphoinositide 3-kinase regulatory subunit 5 (Pik3r5) from Mus musculus (Mouse).